A 252-amino-acid chain; its full sequence is Hydroxyacylglutathione hydrolase (252 aa).

His-54, His-56, Asp-58, His-59, His-111, Asp-128, and His-166 together coordinate Zn(2+).

This sequence belongs to the metallo-beta-lactamase superfamily. Glyoxalase II family. In terms of assembly, monomer. Requires Zn(2+) as cofactor.

It catalyses the reaction an S-(2-hydroxyacyl)glutathione + H2O = a 2-hydroxy carboxylate + glutathione + H(+). It participates in secondary metabolite metabolism; methylglyoxal degradation; (R)-lactate from methylglyoxal: step 2/2. In terms of biological role, thiolesterase that catalyzes the hydrolysis of S-D-lactoyl-glutathione to form glutathione and D-lactic acid. The protein is Hydroxyacylglutathione hydrolase of Vibrio campbellii (strain ATCC BAA-1116).